We begin with the raw amino-acid sequence, 609 residues long: MGSSERSEAFGTPRESDMSSGDEAELEELRREAAMLREQLEHAVGSHGGARSARDVHQLEARIDSLAARNSKLMETLKEARQQLLALREEVDRLGQPPSGYGVLLATHEDDTVDVFTSGRKMRLTCSPNIDVSLLRKGQTVRLNEALTVVEAGTFESVGEISTLRELLADGHRALVVGHADEERIVWLAEPLVADNLPDGHPDALNDDTRPRKLRPGDSLLVDTKAGYAFERIPKAEVEDLVLEEVPDVSYEDIGGLTRQIEQIRDAVELPFLHKELYREYALRPPKGVLLYGPPGCGKTLIAKAVANSLAKKMAEVRGDDAREAKSYFLNIKGPELLNKFVGETERHIRLIFQRAREKASEGTPVIVFFDEMDSIFRTRGTGVSSDVETTVVPQLLSEIDGVEGLENVIVIGASNREDMIDPAILRPGRLDVKIKIERPDAEAAQDIFSKYLTEELPLHADDLAEFGGDRTACIKAMIEKVVERMYAEIDDNRFLEVTYANGDKEVMYFKDFNSGAMIQNVVDRAKKNAIKSVLETGQPGLRIQHLLDSIVDEFAENEDLPNTTNPDDWARISGKKGERIVYIRTLVTGKSSSASRAIDTESNLGQYL.

A disordered region spans residues 1-27 (MGSSERSEAFGTPRESDMSSGDEAELE). Residues 17–96 (DMSSGDEAEL…LREEVDRLGQ (80 aa)) adopt a coiled-coil conformation. Residue 296-301 (GCGKTL) participates in ATP binding. The docks into pockets in the proteasome alpha-ring stretch occupies residues 608–609 (YL).

It belongs to the AAA ATPase family. Homohexamer. Assembles into a hexameric ring structure that caps the 20S proteasome core. Strongly interacts with the prokaryotic ubiquitin-like protein Pup through a hydrophobic interface; the interacting region of ARC lies in its N-terminal coiled-coil domain. There is one Pup binding site per ARC hexamer ring. Upon ATP-binding, the C-terminus of ARC interacts with the alpha-rings of the proteasome core, possibly by binding to the intersubunit pockets.

The protein operates within protein degradation; proteasomal Pup-dependent pathway. Functionally, ATPase which is responsible for recognizing, binding, unfolding and translocation of pupylated proteins into the bacterial 20S proteasome core particle. May be essential for opening the gate of the 20S proteasome via an interaction with its C-terminus, thereby allowing substrate entry and access to the site of proteolysis. Thus, the C-termini of the proteasomal ATPase may function like a 'key in a lock' to induce gate opening and therefore regulate proteolysis. The chain is Proteasome-associated ATPase from Mycobacterium avium (strain 104).